A 440-amino-acid chain; its full sequence is 23S rRNA (uracil(1939)-C(5))-methyltransferase RlmD (440 aa).

Positions 10–68 constitute a TRAM domain; it reads KALPTQAVEITIDNLDHHLTGVGRYQGKACFVEGVLPGEKVSVQITEQKKQYAHARLRQ. [4Fe-4S] cluster contacts are provided by Cys81, Cys87, Cys90, and Cys169. Gln272, Phe301, Asn306, Glu322, Asp349, and Asp372 together coordinate S-adenosyl-L-methionine. Catalysis depends on Cys398, which acts as the Nucleophile.

Belongs to the class I-like SAM-binding methyltransferase superfamily. RNA M5U methyltransferase family. RlmD subfamily.

It catalyses the reaction uridine(1939) in 23S rRNA + S-adenosyl-L-methionine = 5-methyluridine(1939) in 23S rRNA + S-adenosyl-L-homocysteine + H(+). In terms of biological role, catalyzes the formation of 5-methyl-uridine at position 1939 (m5U1939) in 23S rRNA. The polypeptide is 23S rRNA (uracil(1939)-C(5))-methyltransferase RlmD (Tolumonas auensis (strain DSM 9187 / NBRC 110442 / TA 4)).